Reading from the N-terminus, the 427-residue chain is Pre-mRNA-splicing factor PRP46 (427 aa).

WD repeat units follow at residues 113–153 (GHHG…LKVT), 156–195 (AHDM…AIRN), 198–237 (GHLS…PVMT), 240–281 (GHKG…KVLT), 283–322 (HQRT…TNFV), 324–362 (QDLD…KYQT), and 373–412 (ESER…SQDT). The tract at residues 404–427 (QDETASQDTHPNLPWNPKLDSQRL) is disordered.

Belongs to the WD repeat PRL1/PRL2 family. In terms of assembly, associated with the spliceosome.

Its subcellular location is the cytoplasm. The protein localises to the nucleus. Its function is as follows. Involved in pre-mRNA splicing and required for cell cycle progression at G2/M. This Candida glabrata (strain ATCC 2001 / BCRC 20586 / JCM 3761 / NBRC 0622 / NRRL Y-65 / CBS 138) (Yeast) protein is Pre-mRNA-splicing factor PRP46 (PRP46).